An 89-amino-acid chain; its full sequence is DNA-directed RNA polymerase subunit omega (89 aa).

This sequence belongs to the RNA polymerase subunit omega family. In terms of assembly, the RNAP catalytic core consists of 2 alpha, 1 beta, 1 beta' and 1 omega subunit. When a sigma factor is associated with the core the holoenzyme is formed, which can initiate transcription.

It catalyses the reaction RNA(n) + a ribonucleoside 5'-triphosphate = RNA(n+1) + diphosphate. Promotes RNA polymerase assembly. Latches the N- and C-terminal regions of the beta' subunit thereby facilitating its interaction with the beta and alpha subunits. The polypeptide is DNA-directed RNA polymerase subunit omega (Idiomarina loihiensis (strain ATCC BAA-735 / DSM 15497 / L2-TR)).